The sequence spans 660 residues: Septation initiation protein sid4 (660 aa).

3 disordered regions span residues 79–243, 368–396, and 459–503; these read TKKE…QQHF, STTV…PDTK, and RHTS…PAKN. Composition is skewed to polar residues over residues 125–138, 156–176, and 222–243; these read SFNS…STPY, SNSP…QSPK, and RPNQ…QQHF. Positions 384 to 396 are enriched in basic and acidic residues; that stretch reads STKDFKEQKPDTK. Composition is skewed to polar residues over residues 459-480 and 488-497; these read RHTS…ITTK and KENTMLNDGS.

Homodimer. Interacts with cdc11, sad1, plo1 and dma1.

The protein resides in the cytoplasm. It localises to the cytoskeleton. The protein localises to the microtubule organizing center. It is found in the spindle pole body. Functionally, required for activation of the spg1 GTPase signaling cascade which leads to the initiation of septation and the subsequent termination of mitosis. May act as a scaffold at the spindle pole body to which other components of the spg1 signaling cascade attach. The polypeptide is Septation initiation protein sid4 (sid4) (Schizosaccharomyces pombe (strain 972 / ATCC 24843) (Fission yeast)).